The sequence spans 183 residues: uncharacterized protein (183 aa).

This sequence to M.leprae ML2442.

This is an uncharacterized protein from Mycobacterium tuberculosis (strain CDC 1551 / Oshkosh).